The following is a 220-amino-acid chain: Iron-sulfur cluster repair protein YtfE (220 aa).

It belongs to the RIC family. YtfE subfamily. In terms of assembly, homodimer.

It localises to the cytoplasm. Di-iron-containing protein involved in the repair of iron-sulfur clusters damaged by oxidative and nitrosative stress conditions. The chain is Iron-sulfur cluster repair protein YtfE from Enterobacter sp. (strain 638).